An 81-amino-acid chain; its full sequence is ATP synthase subunit c, chloroplastic (81 aa).

Helical transmembrane passes span 3 to 23 (PLIA…ASIG) and 57 to 77 (LAFM…LLFA).

This sequence belongs to the ATPase C chain family. In terms of assembly, F-type ATPases have 2 components, F(1) - the catalytic core - and F(0) - the membrane proton channel. F(1) has five subunits: alpha(3), beta(3), gamma(1), delta(1), epsilon(1). F(0) has four main subunits: a(1), b(1), b'(1) and c(10-14). The alpha and beta chains form an alternating ring which encloses part of the gamma chain. F(1) is attached to F(0) by a central stalk formed by the gamma and epsilon chains, while a peripheral stalk is formed by the delta, b and b' chains.

The protein resides in the plastid. It is found in the chloroplast thylakoid membrane. Functionally, f(1)F(0) ATP synthase produces ATP from ADP in the presence of a proton or sodium gradient. F-type ATPases consist of two structural domains, F(1) containing the extramembraneous catalytic core and F(0) containing the membrane proton channel, linked together by a central stalk and a peripheral stalk. During catalysis, ATP synthesis in the catalytic domain of F(1) is coupled via a rotary mechanism of the central stalk subunits to proton translocation. Key component of the F(0) channel; it plays a direct role in translocation across the membrane. A homomeric c-ring of between 10-14 subunits forms the central stalk rotor element with the F(1) delta and epsilon subunits. The chain is ATP synthase subunit c, chloroplastic from Pisum sativum (Garden pea).